The primary structure comprises 910 residues: MSFKKQTKTPTSWFPGLKKERDLSHHKERYCTQYDVIKVNAYGKRQQRTLAVSSLGVSNLNGQSCQWFVRNSDVYSIEQDPTDSHKFSLTFLHRYHFEAETPEQAKSIISEFKRLGVGSPSGGGGGGSGVSSNGSNSTATSPNTSPIRLYVSDPSNQPTSSSPPPQPPLSESVGVHRSSPMLSSSRMISQLSQSTSENNISSPTYHPQGLSGSSTSSSSASGGGGNNNNANNSTPPNLIASSASNSSLYSSSINSSGIINSSNNNSSISFNNNNNNNNSNLTTTTTTTSTFKTPTLPISQASKFNNESESMGLSPLTPNSNSQTALMQHINAMPNTPNSNSTEGSRVWKIRAEELKKQFLLKKSSKSTQTVATTTPTPITKADIKIVLDDNKDDKNKDNNIGSGGSGNSSSKINKEKDNPYINQPSSLPSNNNSNNNNITKSNSTTTSQTNDKKDVCSSTINFDNLEVSSSSDRDLSSSKSLNKKNKQSIKKLTIDDFELLKVLGVGSFGRVYLVRRKDTGKFYAMKVLNKKDMLKKKQIAHTNTEKMVLSTMDHPFIVRLHFAFQNEDFLFMCMDYVPGGELFHHLQKAGKFPEELAKFYIAEVICSLHYLHSNNIIYRDIKPENILLDEEGHIKLTDFGLSKSGITSVVGSKNGGEGGFATTFCGTPEYLAPEIITGAGHGKAADWWSVGILLFEMLTGRSPFLASNRNDMYKSMIQGNLRMPMFLSSDAQDLLEKLLVPDPNKRLGSTQGFEEISSHPFFELIPWRMLESKMITPPFKPTIKEISLPNSNSNSNNNSQQPTNNNLTLSCDPELNAKINFQRRKSSAASVYNLDSPFKNFSWNKEEEDGIMGERESIGSISSNNSISSSPTSSSPINNNNSGGSNTAGGHRILTRKSTIGKNLRKGSV.

Positions Ser-119 to Gly-129 are enriched in gly residues. Disordered stretches follow at residues Ser-119–Ile-239, Phe-270–Thr-295, and Asn-391–Lys-454. 6 stretches are compositionally biased toward low complexity: residues Val-130–Ser-160, Leu-169–Ser-196, Gly-209–Ala-220, Asn-227–Ile-239, Phe-270–Thr-290, and Ile-422–Thr-450. Positions Phe-498–Phe-763 constitute a Protein kinase domain. ATP-binding positions include Leu-504 to Val-512 and Lys-527. The Proton acceptor role is filled by Asp-621. Phosphothreonine; by autocatalysis is present on Thr-664. In terms of domain architecture, AGC-kinase C-terminal spans Glu-764 to Gly-854. 2 disordered regions span residues Glu-786 to Cys-812 and Ile-859 to Val-910. Low complexity-rich tracts occupy residues Ser-788 to Thr-809 and Ile-859 to Ser-886.

The protein belongs to the protein kinase superfamily. AGC Ser/Thr protein kinase family.

The catalysed reaction is L-seryl-[protein] + ATP = O-phospho-L-seryl-[protein] + ADP + H(+). It carries out the reaction L-threonyl-[protein] + ATP = O-phospho-L-threonyl-[protein] + ADP + H(+). The protein is Protein kinase 3 (pkgC) of Dictyostelium discoideum (Social amoeba).